The primary structure comprises 491 residues: Glutamate--tRNA ligase (491 aa).

Residues 13 to 23 (PSPTGFLHIGN) carry the 'HIGH' region motif. The Zn(2+) site is built by Cys-110, Cys-112, Cys-137, and His-139. Positions 254–258 (KLSKR) match the 'KMSKS' region motif. Lys-257 contacts ATP.

The protein belongs to the class-I aminoacyl-tRNA synthetase family. Glutamate--tRNA ligase type 1 subfamily. As to quaternary structure, monomer. Requires Zn(2+) as cofactor.

The protein localises to the cytoplasm. It catalyses the reaction tRNA(Glu) + L-glutamate + ATP = L-glutamyl-tRNA(Glu) + AMP + diphosphate. Catalyzes the attachment of glutamate to tRNA(Glu) in a two-step reaction: glutamate is first activated by ATP to form Glu-AMP and then transferred to the acceptor end of tRNA(Glu). The polypeptide is Glutamate--tRNA ligase (Listeria welshimeri serovar 6b (strain ATCC 35897 / DSM 20650 / CCUG 15529 / CIP 8149 / NCTC 11857 / SLCC 5334 / V8)).